We begin with the raw amino-acid sequence, 331 residues long: Hydroxysteroid dehydrogenase-like protein 1 (331 aa).

The interval 2-82 (AAVDRFNLLY…TGSTDGIGKA (81 aa)) is required for mitochondria translocation. NADP(+) contacts are provided by residues 74–80 (GSTDGIG) and D125. Residue S205 coordinates substrate. Y218 serves as the catalytic Proton acceptor. Residue K222 participates in NADP(+) binding.

Belongs to the short-chain dehydrogenases/reductases (SDR) family. 17-beta-HSD 3 subfamily.

The protein localises to the mitochondrion. Functionally, may catalyze the metabolism of steroid hormones and thus play an important role in sex differentiation, the emergence and maintenance of the secondary sexual characters, and the regulation of endocrine. This chain is Hydroxysteroid dehydrogenase-like protein 1 (HSDL1), found in Gallus gallus (Chicken).